The chain runs to 798 residues: Pentatricopeptide repeat-containing protein At5g67570, chloroplastic (798 aa).

Disordered regions lie at residues 1 to 21 (MDAS…EFEP) and 50 to 73 (IQKH…EAQK). PPR repeat units follow at residues 254 to 284 (SRFV…MLGD), 290 to 324 (DMAA…PTKL), 340 to 374 (DLVV…GLRP), 375 to 409 (NGAT…GEAP), 410 to 444 (KAIT…GVIG), 445 to 480 (TGSV…NCRP), 481 to 511 (LEIT…MKDK), 515 to 545 (NIGT…IVSR), 553 to 587 (NEYT…GYQM), and 588 to 622 (DQTK…GEIP).

This sequence belongs to the PPR family. P subfamily. Interacts (via C-terminus) with SIGF (via N-terminus).

It localises to the plastid. It is found in the chloroplast. In terms of biological role, involved in the regulation of early chloroplast development and chloroplast gene expression in a SIGF-dependent manner. The polypeptide is Pentatricopeptide repeat-containing protein At5g67570, chloroplastic (DG1) (Arabidopsis thaliana (Mouse-ear cress)).